Here is a 235-residue protein sequence, read N- to C-terminus: 6-carboxyhexanoate--CoA ligase (235 aa).

The protein belongs to the BioW family. Homodimer. The cofactor is Mg(2+).

The catalysed reaction is heptanedioate + ATP + CoA = 6-carboxyhexanoyl-CoA + AMP + diphosphate. It functions in the pathway metabolic intermediate metabolism; pimeloyl-CoA biosynthesis; pimeloyl-CoA from pimelate: step 1/1. Catalyzes the transformation of pimelate into pimeloyl-CoA with concomitant hydrolysis of ATP to AMP. The chain is 6-carboxyhexanoate--CoA ligase from Desulfovibrio desulfuricans (strain ATCC 27774 / DSM 6949 / MB).